The primary structure comprises 495 residues: Amorpha-4,11-diene 12-monooxygenase (495 aa).

Over 1–6 (MKSILK) the chain is Cytoplasmic. A helical; Signal-anchor for type II membrane protein transmembrane segment spans residues 7-29 (AMALSLTTSIALATILLFVYKFA). Topologically, residues 30 to 495 (TRSKSTKKSL…KTELLLVPSF (466 aa)) are lumenal. Asn-176, Asn-261, Asn-267, Asn-386, and Asn-417 each carry an N-linked (GlcNAc...) asparagine glycan. Position 439 (Cys-439) interacts with heme.

Belongs to the cytochrome P450 family. Heme serves as cofactor. In terms of tissue distribution, highly expressed both in apical and sub-apical cells of glandular secretory trichomes. Detected in flower buds, leaves and roots. Also present in non-glandular trichome cells.

Its subcellular location is the endoplasmic reticulum membrane. It catalyses the reaction (+)-amorpha-4,11-diene + 3 reduced [NADPH--hemoprotein reductase] + 3 O2 = (+)-artemisinate + 3 oxidized [NADPH--hemoprotein reductase] + 4 H2O + 4 H(+). It functions in the pathway sesquiterpene biosynthesis. Its function is as follows. Involved in the biosynthesis of the antimalarial endoperoxide artemisinin. Catalyzes three consecutive oxidations of amorpha-4,11-diene to produce artemisinic acid, with artemisinic alcohol and artemisinic aldehyde as intermediates products, but is unable to oxidize germacrene A. No activity with limonene, alpha-pinene, beta-pinene, pinocarveol, (-)-alloisolongifolene, caryophyllene, (-)-alpha-gurjunene, (+)-gamma-gurjunene, (+)-ledene, (+)-beta-selinene and (+)-valencene as substrates. The polypeptide is Amorpha-4,11-diene 12-monooxygenase (Artemisia annua (Sweet wormwood)).